Reading from the N-terminus, the 315-residue chain is Methionyl-tRNA formyltransferase (315 aa).

The N-terminal domain stretch occupies residues 2–189; it reads SESLRIIFAG…LITTLKQLAD (188 aa). 113-116 is a (6S)-5,6,7,8-tetrahydrofolate binding site; sequence SLLP. Residues 210–315 are C-terminal domain; the sequence is KEEARIDWSL…EWFVPGNRLA (106 aa).

Belongs to the Fmt family.

It catalyses the reaction L-methionyl-tRNA(fMet) + (6R)-10-formyltetrahydrofolate = N-formyl-L-methionyl-tRNA(fMet) + (6S)-5,6,7,8-tetrahydrofolate + H(+). In terms of biological role, attaches a formyl group to the free amino group of methionyl-tRNA(fMet). The formyl group appears to play a dual role in the initiator identity of N-formylmethionyl-tRNA by promoting its recognition by IF2 and preventing the misappropriation of this tRNA by the elongation apparatus. The protein is Methionyl-tRNA formyltransferase of Escherichia coli O6:H1 (strain CFT073 / ATCC 700928 / UPEC).